The chain runs to 1997 residues: Otoferlin (1997 aa).

The C2 1 domain occupies 1–98 (MALLIHLKTV…VEESHVEVTD (98 aa)). The Cytoplasmic segment spans residues 1–1963 (MALLIHLKTV…ARYFLWHTYR (1963 aa)). Residues 128 to 171 (WDDGDFLGDESLQEEEKDSQETDGLLPGSRPSSRPPGEKSFRRA) form a disordered region. Residues 129 to 145 (DDGDFLGDESLQEEEKD) are compositionally biased toward acidic residues. C2 domains lie at 236 to 357 (KRSK…HKWA) and 400 to 531 (IEGN…FLPT). Positions 642 to 694 (NEVDGLSRPQRPRPRKEPGDEEEVDLIQNASDDEAGDAGDLASVSSTPPMRPQ) are disordered. Over residues 660 to 678 (GDEEEVDLIQNASDDEAGD) the composition is skewed to acidic residues. A coiled-coil region spans residues 792–821 (RERLKSCMRELENMGQQARMLRAQVKRHTV). 2 C2 domains span residues 944–1069 (LHAF…PPRF) and 1115–1242 (DRGP…PSWN). Ca(2+) contacts are provided by aspartate 976, aspartate 982, aspartate 1038, aspartate 1040, and aspartate 1046. Disordered regions lie at residues 1299–1324 (AEEEKEKKKKKKGTAEEPEEEEPDES) and 1343–1405 (LRQQ…KPKI). Composition is skewed to acidic residues over residues 1314-1324 (EEPEEEEPDES) and 1352-1361 (DLEEKEEVDN). A compositionally biased stretch (basic and acidic residues) spans 1370–1383 (KGKEKARAAKEEKK). Over residues 1387 to 1396 (QSSGSGQGSE) the composition is skewed to low complexity. C2 domains follow at residues 1464–1593 (LPED…ATCG) and 1714–1865 (DMPA…KQCT). 8 residues coordinate Ca(2+): aspartate 1508, aspartate 1514, aspartate 1563, aspartate 1565, aspartate 1571, aspartate 1836, serine 1839, and aspartate 1842. Residues 1964-1984 (WLLLKLLLLLLLLLLLALFLY) traverse the membrane as a helical segment. The Extracellular portion of the chain corresponds to 1985–1997 (SVPGYLVKKILGA).

The protein belongs to the ferlin family. Interacts with SNAP2; the interaction is direct. Interacts with STX1; the interaction is direct. Interacts with RAB8B. Requires Ca(2+) as cofactor. As to expression, isoform 1 and isoform 3 are found in adult brain. Isoform 2 is expressed in the fetus and in adult brain, heart, placenta, skeletal muscle and kidney.

The protein resides in the cytoplasmic vesicle. The protein localises to the secretory vesicle. It localises to the synaptic vesicle membrane. Its subcellular location is the basolateral cell membrane. It is found in the endoplasmic reticulum membrane. The protein resides in the golgi apparatus membrane. The protein localises to the presynaptic cell membrane. It localises to the cell membrane. Functionally, key calcium ion sensor involved in the Ca(2+)-triggered synaptic vesicle-plasma membrane fusion and in the control of neurotransmitter release at these output synapses. Interacts in a calcium-dependent manner to the presynaptic SNARE proteins at ribbon synapses of cochlear inner hair cells (IHCs) to trigger exocytosis of neurotransmitter. Also essential to synaptic exocytosis in immature outer hair cells (OHCs). May also play a role within the recycling of endosomes. In Homo sapiens (Human), this protein is Otoferlin (OTOF).